The sequence spans 242 residues: UPF0173 metal-dependent hydrolase Rxyl_1261 (242 aa).

Belongs to the UPF0173 family.

The polypeptide is UPF0173 metal-dependent hydrolase Rxyl_1261 (Rubrobacter xylanophilus (strain DSM 9941 / JCM 11954 / NBRC 16129 / PRD-1)).